The chain runs to 77 residues: MKTSVLLVILGIAAITVQCTASESVKQDSLRTFVDAVLGWNAEMASEARCGGWMAKCADSDDCCETFHCTRFNVCGK.

The signal sequence occupies residues 1–21; it reads MKTSVLLVILGIAAITVQCTA. Residues 22-49 constitute a propeptide that is removed on maturation; the sequence is SESVKQDSLRTFVDAVLGWNAEMASEAR. Intrachain disulfides connect C50–C64, C57–C69, and C63–C75. The residue at position 77 (K77) is a Lysine amide.

It belongs to the neurotoxin 10 (Hwtx-1) family. 65 (Jztx-21) subfamily. Expressed by the venom gland.

It is found in the secreted. Probable ion channel inhibitor. In Chilobrachys guangxiensis (Chinese earth tiger tarantula), this protein is U14-theraphotoxin-Cg1a 2.